Consider the following 270-residue polypeptide: Glucosamine-6-phosphate deaminase (270 aa).

Catalysis depends on D72, which acts as the Proton acceptor; for enolization step. Residue D141 is the For ring-opening step of the active site. The Proton acceptor; for ring-opening step role is filled by H143. The active-site For ring-opening step is the E148.

Belongs to the glucosamine/galactosamine-6-phosphate isomerase family. NagB subfamily.

The enzyme catalyses alpha-D-glucosamine 6-phosphate + H2O = beta-D-fructose 6-phosphate + NH4(+). The protein operates within amino-sugar metabolism; N-acetylneuraminate degradation; D-fructose 6-phosphate from N-acetylneuraminate: step 5/5. Allosterically activated by N-acetylglucosamine 6-phosphate (GlcNAc6P). Its function is as follows. Catalyzes the reversible isomerization-deamination of glucosamine 6-phosphate (GlcN6P) to form fructose 6-phosphate (Fru6P) and ammonium ion. In Parabacteroides distasonis (strain ATCC 8503 / DSM 20701 / CIP 104284 / JCM 5825 / NCTC 11152), this protein is Glucosamine-6-phosphate deaminase.